The sequence spans 190 residues: Probable chorismate pyruvate-lyase (190 aa).

Substrate contacts are provided by arginine 77, leucine 115, and glutamate 174.

It belongs to the UbiC family.

It localises to the cytoplasm. It carries out the reaction chorismate = 4-hydroxybenzoate + pyruvate. It functions in the pathway cofactor biosynthesis; ubiquinone biosynthesis. In terms of biological role, removes the pyruvyl group from chorismate, with concomitant aromatization of the ring, to provide 4-hydroxybenzoate (4HB) for the ubiquinone pathway. The chain is Probable chorismate pyruvate-lyase from Shewanella sp. (strain MR-4).